Reading from the N-terminus, the 72-residue chain is Mitochondrial import receptor subunit TOM7-1 (72 aa).

Topologically, residues 2 to 41 (LKPKGKNTKKAAAADEDDGAVAVVGKFVKEWGTWTAKKAK) are cytoplasmic. The helical transmembrane segment at 42 to 59 (VITHYGFIPLVIIIGMNS) threads the bilayer. Topologically, residues 60-72 (EPKPSLSQLLSPV) are mitochondrial intermembrane.

It belongs to the Tom7 family. As to quaternary structure, forms part of the preprotein translocase complex of the outer mitochondrial membrane (TOM complex).

It localises to the mitochondrion outer membrane. Seems to act as a modulator of the dynamics of the mitochondrial protein transport machinery. Seems to promote the dissociation of subunits of the outer membrane translocase. This is Mitochondrial import receptor subunit TOM7-1 (TOM7-1) from Solanum tuberosum (Potato).